We begin with the raw amino-acid sequence, 278 residues long: 4-deoxy-L-threo-5-hexosulose-uronate ketol-isomerase (278 aa).

Zn(2+) contacts are provided by H196, H198, E203, and H245.

Belongs to the KduI family. It depends on Zn(2+) as a cofactor.

It carries out the reaction 5-dehydro-4-deoxy-D-glucuronate = 3-deoxy-D-glycero-2,5-hexodiulosonate. The protein operates within glycan metabolism; pectin degradation; 2-dehydro-3-deoxy-D-gluconate from pectin: step 4/5. Functionally, catalyzes the isomerization of 5-dehydro-4-deoxy-D-glucuronate to 3-deoxy-D-glycero-2,5-hexodiulosonate. This is 4-deoxy-L-threo-5-hexosulose-uronate ketol-isomerase from Salmonella agona (strain SL483).